Consider the following 355-residue polypeptide: Myricetin 7/4'-O-methyltransferase 2 (355 aa).

Asp-221 is an S-adenosyl-L-methionine binding site. His-259 acts as the Proton acceptor in catalysis.

The protein belongs to the class I-like SAM-binding methyltransferase superfamily. Cation-independent O-methyltransferase family. As to quaternary structure, homodimer. As to expression, mainly expressed in leaves secreting glandular trichomes types 1 and 4 and, to a lesser extent, in storage trichomes type 6.

The enzyme catalyses quercetin + S-adenosyl-L-methionine = rhamnetin + S-adenosyl-L-homocysteine + H(+). It catalyses the reaction kaempferol + S-adenosyl-L-methionine = kaempferide + S-adenosyl-L-homocysteine + H(+). The catalysed reaction is myricetin + S-adenosyl-L-methionine = 7-O-methylmyricetin + S-adenosyl-L-homocysteine + H(+). It carries out the reaction kaempferide + S-adenosyl-L-methionine = 7,4'-O-dimethylkaempferol + S-adenosyl-L-homocysteine + H(+). The enzyme catalyses isorhamnetin + S-adenosyl-L-methionine = 3',4'-O-dimethylquercetin + S-adenosyl-L-homocysteine + 2 H(+). It catalyses the reaction 3',4',5,7-tetrahydroxy-3-methoxyflavone + S-adenosyl-L-methionine = 3',4',5-trihydroxy-3,7-dimethoxyflavone + S-adenosyl-L-homocysteine + H(+). The catalysed reaction is rhamnetin + S-adenosyl-L-methionine = 7,4'-O-dimethylquercetin + S-adenosyl-L-homocysteine + H(+). It carries out the reaction syringetin + S-adenosyl-L-methionine = 7,3',5'-O-trimethylmyricetin + S-adenosyl-L-homocysteine + H(+). The enzyme catalyses 3',4',5'-O-trimethylmyricetin + S-adenosyl-L-methionine = 7,3',4',5'-O-tetramethylmyricetin + S-adenosyl-L-homocysteine. The protein operates within flavonoid metabolism. Its function is as follows. Flavonoid 7/4'-O-methyltransferase involved in the biosynthesis of polymethoxylated flavonoids natural products such as myricetin derivatives, aroma compounds possessing antioxidant properties and exhibiting pharmacological activities such as anti-carcinogen, anti-viral, anti-thrombotic, anti-diabetic, anti-atherosclerotic, and anti-inflammatory effects. Catalyzes S-adenosylmethionine-dependent regioselective 7/4'-O-methylation of flavonoids; active on various hydroxylated flavonoid substrates, including myricetin, quercetin and kaempferol. Mediates the formation of 4'-methyl derivatives from kaempferol, 3'-methyl quercetin (isorhamnetin), 7-methyl quercetin (rhamnetin) and 3'-methyl myricetin, producing 4'-methyl kaempferol (kaempferide), 3',4'-dimethyl quercetin (4'-O-methyl isorhamnetin), 7,4'-dimethyl quercetin (4'-O-methyl rhamnetin, rhamnacene) and 3',4'-dimethyl myricetin, respectively. Triggers the 7-O-methylation of quercetin, myricetin, 4'-methyl kaempferol (kaempferide), 3-methyl quercetin, 3',5'-dimethyl myricetin (syringetin) and 3',4',5'-trimethyl myricetin, thus leading to production of 7-methyl quercetin (rhamnetin), 7-methyl myricetin, 7,4'-dimethyl kaempferol (7-O-methyl kaempferide), 3,7-dimethyl quercetin, 7,3',5'-trimethyl myricetin (7-O-methyl syringetin) and 7,3',4',5'-tetramethyl myricetin, respectively. In Solanum habrochaites (Wild tomato), this protein is Myricetin 7/4'-O-methyltransferase 2.